Here is a 271-residue protein sequence, read N- to C-terminus: Tritrans,polycis-undecaprenyl-diphosphate synthase (geranylgeranyl-diphosphate specific) (271 aa).

The active site involves Asp-50. Position 50 (Asp-50) interacts with Mg(2+). Residues 51-54 (GNRR), Phe-55, His-67, and 95-97 (STE) each bind substrate. The active-site Proton acceptor is Asn-98. Residues Arg-101, Arg-220, and 226 to 228 (RLS) each bind substrate. Glu-239 provides a ligand contact to Mg(2+).

The protein belongs to the UPP synthase family. As to quaternary structure, homodimer. The cofactor is Mg(2+).

It carries out the reaction geranylgeranyl diphosphate + 7 isopentenyl diphosphate = tri-trans,hepta-cis-undecaprenyl diphosphate + 7 diphosphate. Its function is as follows. Catalyzes the sequential condensation of isopentenyl diphosphate (IPP) with geranylgeranyl diphosphate (GGPP) to yield (2Z,6Z,10Z,14Z,18Z,22Z,26Z,30E,34E,38E)-undecaprenyl diphosphate (tritrans,heptacis-UPP). It is probably the precursor of glycosyl carrier lipids. The polypeptide is Tritrans,polycis-undecaprenyl-diphosphate synthase (geranylgeranyl-diphosphate specific) (Methanopyrus kandleri (strain AV19 / DSM 6324 / JCM 9639 / NBRC 100938)).